The following is a 242-amino-acid chain: Triosephosphate isomerase (242 aa).

9–11 is a binding site for substrate; that stretch reads NWK. H96 acts as the Electrophile in catalysis. The active-site Proton acceptor is the E165. Substrate is bound by residues G171, S204, and 225-226; that span reads GG.

The protein belongs to the triosephosphate isomerase family. As to quaternary structure, homodimer.

It is found in the cytoplasm. It carries out the reaction D-glyceraldehyde 3-phosphate = dihydroxyacetone phosphate. The protein operates within carbohydrate biosynthesis; gluconeogenesis. It participates in carbohydrate degradation; glycolysis; D-glyceraldehyde 3-phosphate from glycerone phosphate: step 1/1. Its function is as follows. Involved in the gluconeogenesis. Catalyzes stereospecifically the conversion of dihydroxyacetone phosphate (DHAP) to D-glyceraldehyde-3-phosphate (G3P). In Synechocystis sp. (strain ATCC 27184 / PCC 6803 / Kazusa), this protein is Triosephosphate isomerase.